The primary structure comprises 483 residues: GTPase Der (483 aa).

EngA-type G domains follow at residues 3–167 (FTLA…GEER) and 212–387 (LRIA…EIWN). GTP-binding positions include 9–16 (GRPNVGKS), 56–60 (DTAGL), 119–122 (NKAE), 218–225 (GRPNAGKS), 265–269 (DTAGM), and 330–333 (NKWD). One can recognise a KH-like domain in the interval 388–472 (RRISTGRLNR…PIRLSLRTSD (85 aa)).

This sequence belongs to the TRAFAC class TrmE-Era-EngA-EngB-Septin-like GTPase superfamily. EngA (Der) GTPase family. As to quaternary structure, associates with the 50S ribosomal subunit.

Functionally, GTPase that plays an essential role in the late steps of ribosome biogenesis. This Brucella melitensis biotype 2 (strain ATCC 23457) protein is GTPase Der.